The sequence spans 405 residues: Serine/threonine-protein kinase SSN3 (405 aa).

A Protein kinase domain is found at 40–350; sequence YEIIGYIAAG…ANDALLHPYF (311 aa). Residues 46–54 and K71 contribute to the ATP site; that span reads IAAGTYGRV. The Proton acceptor role is filled by D173. The tract at residues 377–405 is disordered; it reads DSDIKTMTYQGTKRGSQGGDNLHPRKKQK. Residues 381–391 are compositionally biased toward polar residues; that stretch reads KTMTYQGTKRG.

It belongs to the protein kinase superfamily. CMGC Ser/Thr protein kinase family. CDC2/CDKX subfamily. Component of the srb8-11 complex, a regulatory module of the Mediator complex. Mg(2+) is required as a cofactor.

The protein localises to the nucleus. The catalysed reaction is L-seryl-[protein] + ATP = O-phospho-L-seryl-[protein] + ADP + H(+). It catalyses the reaction L-threonyl-[protein] + ATP = O-phospho-L-threonyl-[protein] + ADP + H(+). It carries out the reaction [DNA-directed RNA polymerase] + ATP = phospho-[DNA-directed RNA polymerase] + ADP + H(+). In terms of biological role, component of the srb8-11 complex. The srb8-11 complex is a regulatory module of the Mediator complex which is itself dependent transcription. The srb8-11 complex may be involved in the transcriptional repression of a subset of genes regulated by Mediator. It may inhibit the association of the Mediator complex with RNA polymerase II to form the holoenzyme complex. The srb8-11 complex phosphorylates the C-terminal domain (CTD) of the largest subunit of RNA polymerase II. The protein is Serine/threonine-protein kinase SSN3 (SSN3) of Yarrowia lipolytica (strain CLIB 122 / E 150) (Yeast).